The primary structure comprises 481 residues: MASPQSTKTGLNLPAGMNQTSLRLETFSSSFRGISSLSSPSKSTCSDRFIPCRSSSRLHAFDLQDKEPTTPVKEGGNEAYSRLLKSELFGSDFASPLLSPAGGQGSASSPMSPCTNMLRFKTDRSNSSPSSPFSPSILGNDNGHSSDSSPPPKPPRKVPKTPHKVLDAPSLQDDFYLNVVDWSSQNVLAVGLGTCVYLWTASNSKVTKLCDLGPNDSVCSVQWTREGSYISIGTSHGQVQVWDGTQCKRVRTMGGHQTRTGVLAWNSRILSSGSRDRNILQHDIRVQSDFVSKLVGHKSEVCGLKWSHDDRELASGGNDNQLLVWNNHSQQPILKLTEHTAAVKAITWSPHQSSLLASGGGTADRCIRFWNTTNGNQLNSIDTGSQVCNLAWSKNVNEIVSTHGYSQNQIMLWKYPSMSKVATLTGHSMRVLYLATSPDGQTIVTGAGDETLRFWNVFPSVKMQTPVKDTGLWSLGRTQIR.

A disordered region spans residues 100–165; it reads PAGGQGSASS…RKVPKTPHKV (66 aa). Low complexity predominate over residues 125-136; it reads SNSSPSSPFSPS. Residues 154 to 163 show a composition bias toward basic residues; it reads PPRKVPKTPH. WD repeat units follow at residues 172–209, 213–252, 255–292, 296–335, 338–380, 382–423, and 426–465; these read QDDF…VTKL, GPND…RVRT, GHQT…DFVS, GHKS…PILK, EHTA…QLNS, DTGS…KVAT, and GHSM…KMQT.

The protein belongs to the WD repeat CDC20/Fizzy family. Associates with the APC/C complex. Interacts with CDC20-1, CDC20-2, CYCA1-1, CYCA3-4, CYCB1-1 and CYCB1-2. Binds to GIG1 and PYM.

Its pathway is protein modification; protein ubiquitination. In terms of biological role, activator protein that regulates the ubiquitin ligase activity and substrate specificity of the anaphase promoting complex/cyclosome (APC/C). This chain is Protein FIZZY-RELATED 3 (FZR3), found in Arabidopsis thaliana (Mouse-ear cress).